The sequence spans 92 residues: Small ribosomal subunit protein uS19 (92 aa).

Belongs to the universal ribosomal protein uS19 family.

Functionally, protein S19 forms a complex with S13 that binds strongly to the 16S ribosomal RNA. The polypeptide is Small ribosomal subunit protein uS19 (Lactococcus lactis subsp. lactis (strain IL1403) (Streptococcus lactis)).